Reading from the N-terminus, the 586-residue chain is Nucleus accumbens-associated protein 2 (586 aa).

Residues Cys30–Ala94 enclose the BTB domain. Lys171 participates in a covalent cross-link: Glycyl lysine isopeptide (Lys-Gly) (interchain with G-Cter in SUMO2). The disordered stretch occupies residues Met177–Arg196. A Glycyl lysine isopeptide (Lys-Gly) (interchain with G-Cter in SUMO2) cross-link involves residue Lys215. Residues Gln236–Ala272 form a disordered region. Polar residues predominate over residues Pro247 to Tyr261. Residues Lys297, Lys427, and Lys454 each participate in a glycyl lysine isopeptide (Lys-Gly) (interchain with G-Cter in SUMO2) cross-link. The 98-residue stretch at Gly349–Arg446 folds into the BEN domain. Residues Ala542–Leu586 form a disordered region. A compositionally biased stretch (polar residues) spans Gly550–Ala572.

Homooligomer; mediated by the BTB domain. Interacts with the NuRD complex. Interacts (via C-terminal part) with HDAC2. Interacts (via BTB domain) with MTA1, MTA2 and MTA3.

It is found in the nucleus. Functions as a transcriptional repressor through its association with the NuRD complex. Recruits the NuRD complex to the promoter of MDM2, leading to the repression of MDM2 transcription and subsequent stability of p53/TP53. The chain is Nucleus accumbens-associated protein 2 (Nacc2) from Mus musculus (Mouse).